Reading from the N-terminus, the 229-residue chain is Enolase-phosphatase E1 (229 aa).

This sequence belongs to the HAD-like hydrolase superfamily. MasA/MtnC family. As to quaternary structure, monomer. The cofactor is Mg(2+).

It carries out the reaction 5-methylsulfanyl-2,3-dioxopentyl phosphate + H2O = 1,2-dihydroxy-5-(methylsulfanyl)pent-1-en-3-one + phosphate. Its pathway is amino-acid biosynthesis; L-methionine biosynthesis via salvage pathway; L-methionine from S-methyl-5-thio-alpha-D-ribose 1-phosphate: step 3/6. It functions in the pathway amino-acid biosynthesis; L-methionine biosynthesis via salvage pathway; L-methionine from S-methyl-5-thio-alpha-D-ribose 1-phosphate: step 4/6. Its function is as follows. Bifunctional enzyme that catalyzes the enolization of 2,3-diketo-5-methylthiopentyl-1-phosphate (DK-MTP-1-P) into the intermediate 2-hydroxy-3-keto-5-methylthiopentenyl-1-phosphate (HK-MTPenyl-1-P), which is then dephosphorylated to form the acireductone 1,2-dihydroxy-3-keto-5-methylthiopentene (DHK-MTPene). In Yersinia pestis (strain Pestoides F), this protein is Enolase-phosphatase E1.